The sequence spans 412 residues: Putative disintegrin and metalloproteinase domain-containing protein 5 (412 aa).

Residues 111-199 (EKYADTNILL…YCLPDTYVRD (89 aa)) enclose the Disintegrin domain. The region spanning 351-385 (NLKLCDASNHCDRHGVCNNFNHCHCEKGYNPPYCQ) is the EGF-like domain.

Interacts with TEX101. As to expression, highly expressed in testis.

This is a non catalytic metalloprotease-like protein. The chain is Putative disintegrin and metalloproteinase domain-containing protein 5 (ADAM5) from Homo sapiens (Human).